Reading from the N-terminus, the 459-residue chain is Siroheme synthase (459 aa).

The tract at residues 1 to 204 is precorrin-2 dehydrogenase /sirohydrochlorin ferrochelatase; it reads MDHLPIFCQL…ADEKAVNATT (204 aa). Residues 22–23 and 43–44 contribute to the NAD(+) site; these read DV and LT. Ser-128 carries the phosphoserine modification. The segment at 216–459 is uroporphyrinogen-III C-methyltransferase; it reads GEVVLVGAGP…KLNWFSNYYD (244 aa). Pro-225 provides a ligand contact to S-adenosyl-L-methionine. Catalysis depends on Asp-248, which acts as the Proton acceptor. Catalysis depends on Lys-270, which acts as the Proton donor. S-adenosyl-L-methionine is bound by residues 301 to 303, Ile-306, 331 to 332, Met-382, and Gly-411; these read GGD and TA.

This sequence in the N-terminal section; belongs to the precorrin-2 dehydrogenase / sirohydrochlorin ferrochelatase family. In the C-terminal section; belongs to the precorrin methyltransferase family.

It carries out the reaction uroporphyrinogen III + 2 S-adenosyl-L-methionine = precorrin-2 + 2 S-adenosyl-L-homocysteine + H(+). It catalyses the reaction precorrin-2 + NAD(+) = sirohydrochlorin + NADH + 2 H(+). The enzyme catalyses siroheme + 2 H(+) = sirohydrochlorin + Fe(2+). It functions in the pathway cofactor biosynthesis; adenosylcobalamin biosynthesis; precorrin-2 from uroporphyrinogen III: step 1/1. It participates in cofactor biosynthesis; adenosylcobalamin biosynthesis; sirohydrochlorin from precorrin-2: step 1/1. The protein operates within porphyrin-containing compound metabolism; siroheme biosynthesis; precorrin-2 from uroporphyrinogen III: step 1/1. Its pathway is porphyrin-containing compound metabolism; siroheme biosynthesis; siroheme from sirohydrochlorin: step 1/1. It functions in the pathway porphyrin-containing compound metabolism; siroheme biosynthesis; sirohydrochlorin from precorrin-2: step 1/1. In terms of biological role, multifunctional enzyme that catalyzes the SAM-dependent methylations of uroporphyrinogen III at position C-2 and C-7 to form precorrin-2 via precorrin-1. Then it catalyzes the NAD-dependent ring dehydrogenation of precorrin-2 to yield sirohydrochlorin. Finally, it catalyzes the ferrochelation of sirohydrochlorin to yield siroheme. The polypeptide is Siroheme synthase (Salmonella agona (strain SL483)).